The chain runs to 252 residues: Phosphate import ATP-binding protein PstB (252 aa).

Positions 5-247 (LIASDVNIFY…PRDERTEAYV (243 aa)) constitute an ABC transporter domain. 37 to 44 (GPSGCGKT) contributes to the ATP binding site.

This sequence belongs to the ABC transporter superfamily. Phosphate importer (TC 3.A.1.7) family. As to quaternary structure, the complex is composed of two ATP-binding proteins (PstB), two transmembrane proteins (PstC and PstA) and a solute-binding protein (PstS).

Its subcellular location is the cell membrane. The catalysed reaction is phosphate(out) + ATP + H2O = ADP + 2 phosphate(in) + H(+). Its function is as follows. Part of the ABC transporter complex PstSACB involved in phosphate import. Responsible for energy coupling to the transport system. The chain is Phosphate import ATP-binding protein PstB from Deinococcus geothermalis (strain DSM 11300 / CIP 105573 / AG-3a).